Here is a 281-residue protein sequence, read N- to C-terminus: MQHDHSAEPLSPGLYIVATPIGNLGDITLRAIETLRRCDAVACEDTRMTGKLLKHLGISKSLWRYDDHSDAKAREKIVAAISEKAVALVSDAGTPLISDPGYRLVRDARDASLPVTTIPGACAAIAGLTLSGLPSDRFLFAGFLPVKDKARREMLEKLAPVDASLIFYETGPRLLKSLAAIDEMLPNREISVARELTKLHEECRRGMGAGLMAHYQANPPKGEIVLMVGPPPEAAPDDTDAELMLREALETMKPSQAAGHVAKATGLDRKDLYSRALELKT.

It belongs to the methyltransferase superfamily. RsmI family.

The protein resides in the cytoplasm. The catalysed reaction is cytidine(1402) in 16S rRNA + S-adenosyl-L-methionine = 2'-O-methylcytidine(1402) in 16S rRNA + S-adenosyl-L-homocysteine + H(+). Its function is as follows. Catalyzes the 2'-O-methylation of the ribose of cytidine 1402 (C1402) in 16S rRNA. In Erythrobacter litoralis (strain HTCC2594), this protein is Ribosomal RNA small subunit methyltransferase I.